The sequence spans 467 residues: Glutamate--tRNA ligase (467 aa).

The 'HIGH' region signature appears at 9-19 (PSPTGYLHIGG). A 'KMSKS' region motif is present at residues 237–241 (KLSKR). Lys-240 is a binding site for ATP.

Belongs to the class-I aminoacyl-tRNA synthetase family. Glutamate--tRNA ligase type 1 subfamily. In terms of assembly, monomer.

The protein resides in the cytoplasm. It catalyses the reaction tRNA(Glu) + L-glutamate + ATP = L-glutamyl-tRNA(Glu) + AMP + diphosphate. Its function is as follows. Catalyzes the attachment of glutamate to tRNA(Glu) in a two-step reaction: glutamate is first activated by ATP to form Glu-AMP and then transferred to the acceptor end of tRNA(Glu). The protein is Glutamate--tRNA ligase of Stenotrophomonas maltophilia (strain R551-3).